The primary structure comprises 519 residues: (3S,6E)-nerolidol synthase 1 (519 aa).

The Mg(2+) site is built by Asp273, Asp277, Asp417, Ser421, and Glu425. A DDXXD motif motif is present at residues 273-277 (DDIFD).

Belongs to the terpene synthase family. Tpsg subfamily. It depends on Mg(2+) as a cofactor. Requires Mn(2+) as cofactor. As to expression, expressed in receptacle tissue. Not detected in leaves or green fruit.

The protein localises to the cytoplasm. The protein resides in the cytosol. It catalyses the reaction (2E,6E)-farnesyl diphosphate + H2O = (3S,6E)-nerolidol + diphosphate. It functions in the pathway secondary metabolite biosynthesis; terpenoid biosynthesis. Involved in monoterpene (C10) and sesquiterpene (C15) biosynthesis. Converts geranyl diphosphate (GPP) into S-linalool and farnesyl diphosphate (FPP) into (3S)-E-nerolidol. Exclusively present and highly expressed in the fruit of cultivated (octaploid) varieties. In Fragaria ananassa (Strawberry), this protein is (3S,6E)-nerolidol synthase 1.